We begin with the raw amino-acid sequence, 67 residues long: Large ribosomal subunit protein bL35 (67 aa).

This sequence belongs to the bacterial ribosomal protein bL35 family.

The chain is Large ribosomal subunit protein bL35 from Methylorubrum extorquens (strain CM4 / NCIMB 13688) (Methylobacterium extorquens).